A 387-amino-acid chain; its full sequence is MFYSFCKVGQYMTYFKFELIHRSKKSRARVGRIHTPHGIIDTPNFVAVGTNGTVKALNNTMLHDIGLQLMFCNTYHMMLQPGTDIVRQAGGLHSFIQRKLPIITDSGGFQVFSLAYGSVADELKSRGTKKQGGCVLKITEEGVLFRSYRDGSKVLLTPESSIKAQKDLGADIIIPFDELPPYHIARDALKKSLDRTHRWEKRSLEAHLKNPQEQAMYAVVHGGIDPDLRKESCAILTELPFDGFAVGGSMGKTKDEMHTLLSLTLPLLPEDKPNHLLGIGDLPSIERSVPLGIDTFDSSYPTRAARHGILLTKQGPLNITKSEYATNFNSIEKGCLCPACHHFSLAYIHHLFKARELTCMSLATVHNLYFMVQLMEKYRKQIQEDLI.

Asp-105 functions as the Proton acceptor in the catalytic mechanism. Substrate is bound by residues 105 to 109 (DSGGF), Asp-177, and Gly-248. An RNA binding region spans residues 278–284 (GIGDLPS). The active-site Nucleophile is Asp-297. Positions 302 to 306 (TRAAR) are RNA binding; important for wobble base 34 recognition. Residues Cys-335, Cys-337, Cys-340, and His-366 each contribute to the Zn(2+) site.

This sequence belongs to the queuine tRNA-ribosyltransferase family. In terms of assembly, homodimer. Within each dimer, one monomer is responsible for RNA recognition and catalysis, while the other monomer binds to the replacement base PreQ1. Zn(2+) serves as cofactor.

The enzyme catalyses 7-aminomethyl-7-carbaguanine + guanosine(34) in tRNA = 7-aminomethyl-7-carbaguanosine(34) in tRNA + guanine. The protein operates within tRNA modification; tRNA-queuosine biosynthesis. Functionally, catalyzes the base-exchange of a guanine (G) residue with the queuine precursor 7-aminomethyl-7-deazaguanine (PreQ1) at position 34 (anticodon wobble position) in tRNAs with GU(N) anticodons (tRNA-Asp, -Asn, -His and -Tyr). Catalysis occurs through a double-displacement mechanism. The nucleophile active site attacks the C1' of nucleotide 34 to detach the guanine base from the RNA, forming a covalent enzyme-RNA intermediate. The proton acceptor active site deprotonates the incoming PreQ1, allowing a nucleophilic attack on the C1' of the ribose to form the product. After dissociation, two additional enzymatic reactions on the tRNA convert PreQ1 to queuine (Q), resulting in the hypermodified nucleoside queuosine (7-(((4,5-cis-dihydroxy-2-cyclopenten-1-yl)amino)methyl)-7-deazaguanosine). The sequence is that of Queuine tRNA-ribosyltransferase from Protochlamydia amoebophila (strain UWE25).